The following is a 516-amino-acid chain: Cytochrome P450 1A2 (516 aa).

O-linked (GlcNAc) serine glycosylation is present at serine 69. Phenylalanine 226 is a binding site for substrate. Cysteine 458 contacts heme.

It belongs to the cytochrome P450 family. In terms of assembly, interacts with PGRMC1; the interaction requires PGRMC1 homodimerization. Requires heme as cofactor.

It localises to the endoplasmic reticulum membrane. The protein localises to the microsome membrane. The enzyme catalyses an organic molecule + reduced [NADPH--hemoprotein reductase] + O2 = an alcohol + oxidized [NADPH--hemoprotein reductase] + H2O + H(+). The catalysed reaction is 17beta-estradiol + reduced [NADPH--hemoprotein reductase] + O2 = 2-hydroxy-17beta-estradiol + oxidized [NADPH--hemoprotein reductase] + H2O + H(+). It carries out the reaction 17beta-estradiol + reduced [NADPH--hemoprotein reductase] + O2 = 4-hydroxy-17beta-estradiol + oxidized [NADPH--hemoprotein reductase] + H2O + H(+). It catalyses the reaction estrone + reduced [NADPH--hemoprotein reductase] + O2 = 2-hydroxyestrone + oxidized [NADPH--hemoprotein reductase] + H2O + H(+). The enzyme catalyses estrone + reduced [NADPH--hemoprotein reductase] + O2 = 4-hydroxyestrone + oxidized [NADPH--hemoprotein reductase] + H2O + H(+). The catalysed reaction is cholesterol + reduced [NADPH--hemoprotein reductase] + O2 = 25-hydroxycholesterol + oxidized [NADPH--hemoprotein reductase] + H2O + H(+). It carries out the reaction all-trans-retinol + reduced [NADPH--hemoprotein reductase] + O2 = all-trans-retinal + oxidized [NADPH--hemoprotein reductase] + 2 H2O + H(+). It catalyses the reaction all-trans-retinal + reduced [NADPH--hemoprotein reductase] + O2 = all-trans-retinoate + oxidized [NADPH--hemoprotein reductase] + H2O + 2 H(+). The enzyme catalyses (5Z,8Z,11Z,14Z)-eicosatetraenoate + reduced [NADPH--hemoprotein reductase] + O2 = (14R,15S)-epoxy-(5Z,8Z,11Z)-eicosatrienoate + oxidized [NADPH--hemoprotein reductase] + H2O + H(+). The catalysed reaction is (5Z,8Z,11Z,14Z)-eicosatetraenoate + reduced [NADPH--hemoprotein reductase] + O2 = (14S,15R)-epoxy-(5Z,8Z,11Z)-eicosatrienoate + oxidized [NADPH--hemoprotein reductase] + H2O + H(+). It carries out the reaction (5Z,8Z,11Z,14Z,17Z)-eicosapentaenoate + reduced [NADPH--hemoprotein reductase] + O2 = (17R,18S)-epoxy-(5Z,8Z,11Z,14Z)-eicosatetraenoate + oxidized [NADPH--hemoprotein reductase] + H2O + H(+). It catalyses the reaction (4Z,7Z,10Z,13Z,16Z,19Z)-docosahexaenoate + reduced [NADPH--hemoprotein reductase] + O2 = (19R,20S)-epoxy-(4Z,7Z,10Z,13Z,16Z)-docosapentaenoate + oxidized [NADPH--hemoprotein reductase] + H2O + H(+). The enzyme catalyses (5S)-hydroperoxy-(6E,8Z,11Z,14Z)-eicosatetraenoate = 5-oxo-(6E,8Z,11Z,14Z)-eicosatetraenoate + H2O. The catalysed reaction is (12S)-hydroperoxy-(5Z,8Z,10E,14Z)-eicosatetraenoate = 12-oxo-(5Z,8Z,10E,14Z)-eicosatetraenoate + H2O. It carries out the reaction (15S)-hydroperoxy-(5Z,8Z,11Z,13E)-eicosatetraenoate = 15-oxo-(5Z,8Z,11Z,13E)-eicosatetraenoate + H2O. It catalyses the reaction (13S)-hydroperoxy-(9Z,11E)-octadecadienoate = 13-oxo-(9Z,11E)-octadecadienoate + H2O. The enzyme catalyses (5Z,8Z,11Z,14Z)-eicosatetraenoate + reduced [NADPH--hemoprotein reductase] + O2 = 13-hydroxy-(5Z,8Z,11Z,14Z)-eicosatetraenoate + oxidized [NADPH--hemoprotein reductase] + H2O + H(+). The catalysed reaction is (5Z,8Z,11Z,14Z)-eicosatetraenoate + reduced [NADPH--hemoprotein reductase] + O2 = 19-hydroxy-(5Z,8Z,11Z,14Z)-eicosatetraenoate + oxidized [NADPH--hemoprotein reductase] + H2O + H(+). It carries out the reaction (9Z,12Z)-octadecadienoate + reduced [NADPH--hemoprotein reductase] + O2 = 11-hydroxy-(9Z,12Z)-octadecadienoate + oxidized [NADPH--hemoprotein reductase] + H2O + H(+). It functions in the pathway cofactor metabolism; retinol metabolism. It participates in steroid metabolism; cholesterol metabolism. Its pathway is lipid metabolism; arachidonate metabolism. Its function is as follows. A cytochrome P450 monooxygenase involved in the metabolism of various endogenous substrates, including fatty acids, steroid hormones and vitamins. Mechanistically, uses molecular oxygen inserting one oxygen atom into a substrate, and reducing the second into a water molecule, with two electrons provided by NADPH via cytochrome P450 reductase (NADPH--hemoprotein reductase). Catalyzes the hydroxylation of carbon-hydrogen bonds. Exhibits high catalytic activity for the formation of hydroxyestrogens from estrone (E1) and 17beta-estradiol (E2), namely 2-hydroxy E1 and E2. Metabolizes cholesterol toward 25-hydroxycholesterol, a physiological regulator of cellular cholesterol homeostasis. May act as a major enzyme for all-trans retinoic acid biosynthesis in the liver. Catalyzes two successive oxidative transformation of all-trans retinol to all-trans retinal and then to the active form all-trans retinoic acid. Primarily catalyzes stereoselective epoxidation of the last double bond of polyunsaturated fatty acids (PUFA), displaying a strong preference for the (R,S) stereoisomer. Catalyzes bisallylic hydroxylation and omega-1 hydroxylation of PUFA. May also participate in eicosanoids metabolism by converting hydroperoxide species into oxo metabolites (lipoxygenase-like reaction, NADPH-independent). Plays a role in the oxidative metabolism of xenobiotics. Catalyzes the N-hydroxylation of heterocyclic amines and the O-deethylation of phenacetin. Metabolizes caffeine via N3-demethylation. The protein is Cytochrome P450 1A2 (CYP1A2) of Macaca fuscata fuscata (Japanese macaque).